Consider the following 262-residue polypeptide: Pyridoxine 5'-phosphate synthase (262 aa).

N6 provides a ligand contact to 3-amino-2-oxopropyl phosphate. 8-9 (DH) lines the 1-deoxy-D-xylulose 5-phosphate pocket. R17 contributes to the 3-amino-2-oxopropyl phosphate binding site. Residue H43 is the Proton acceptor of the active site. 2 residues coordinate 1-deoxy-D-xylulose 5-phosphate: R45 and H50. Residue E70 is the Proton acceptor of the active site. Position 102 (T102) interacts with 1-deoxy-D-xylulose 5-phosphate. H215 acts as the Proton donor in catalysis. Residues G216 and 237-238 (GH) each bind 3-amino-2-oxopropyl phosphate.

Belongs to the PNP synthase family. Homooctamer; tetramer of dimers.

The protein localises to the cytoplasm. It carries out the reaction 3-amino-2-oxopropyl phosphate + 1-deoxy-D-xylulose 5-phosphate = pyridoxine 5'-phosphate + phosphate + 2 H2O + H(+). Its pathway is cofactor biosynthesis; pyridoxine 5'-phosphate biosynthesis; pyridoxine 5'-phosphate from D-erythrose 4-phosphate: step 5/5. In terms of biological role, catalyzes the complicated ring closure reaction between the two acyclic compounds 1-deoxy-D-xylulose-5-phosphate (DXP) and 3-amino-2-oxopropyl phosphate (1-amino-acetone-3-phosphate or AAP) to form pyridoxine 5'-phosphate (PNP) and inorganic phosphate. This Helicobacter pylori (strain G27) protein is Pyridoxine 5'-phosphate synthase.